The sequence spans 401 residues: Tyrosine--tRNA ligase (401 aa).

The 'HIGH' region signature appears at 42-51 (PTAPDLHLGH). Residues 226-230 (KMSKS) carry the 'KMSKS' region motif. Residue lysine 229 coordinates ATP. The region spanning 336-397 (IALAQLLKQI…GKRRIAKLSI (62 aa)) is the S4 RNA-binding domain.

Belongs to the class-I aminoacyl-tRNA synthetase family. TyrS type 2 subfamily. In terms of assembly, homodimer.

It is found in the cytoplasm. The catalysed reaction is tRNA(Tyr) + L-tyrosine + ATP = L-tyrosyl-tRNA(Tyr) + AMP + diphosphate + H(+). Functionally, catalyzes the attachment of tyrosine to tRNA(Tyr) in a two-step reaction: tyrosine is first activated by ATP to form Tyr-AMP and then transferred to the acceptor end of tRNA(Tyr). In Legionella pneumophila (strain Paris), this protein is Tyrosine--tRNA ligase.